The sequence spans 77 residues: Mu-conotoxin BuIIIA (77 aa).

A signal peptide spans 1–22 (MMSKLGVLLTICLLLFPLFALP). A propeptide spanning residues 23–51 (QDGDQPADRPAERMQDDISSEQNSLLEKR) is cleaved from the precursor. The disordered stretch occupies residues 26-46 (DQPADRPAERMQDDISSEQNS). The span at 28–38 (PADRPAERMQD) shows a compositional bias: basic and acidic residues. Intrachain disulfides connect C56–C67, C57–C73, and C63–C74. A Cysteine amide modification is found at C74.

It belongs to the conotoxin M superfamily. Expressed by the venom duct.

The protein resides in the secreted. Mu-conotoxins block voltage-gated sodium channels (Nav). This synthetic toxin potently blocks rNav1.2/SCN2A, and rNav1.4/SCN4A. It also moderately blocks rNav1.1/SCN1A, rNav1.3/SCN3A, rNav1.5/SCN5A, and mNav1.6/SCN8A. The inhibition is reversible. The polypeptide is Mu-conotoxin BuIIIA (Conus bullatus (Bubble cone)).